The sequence spans 464 residues: Anthranilate synthase component 1 (464 aa).

L-tryptophan contacts are provided by residues serine 41 and 236 to 238 (PYM). 271-272 (GT) contacts chorismate. Glutamate 298 contributes to the Mg(2+) binding site. Residues tyrosine 386, arginine 406, 420-422 (GAG), and glycine 422 contribute to the chorismate site. Mg(2+) is bound at residue glutamate 435.

The protein belongs to the anthranilate synthase component I family. As to quaternary structure, heterotetramer consisting of two non-identical subunits: a beta subunit (TrpG) and a large alpha subunit (TrpE). Mg(2+) serves as cofactor.

The enzyme catalyses chorismate + L-glutamine = anthranilate + pyruvate + L-glutamate + H(+). It functions in the pathway amino-acid biosynthesis; L-tryptophan biosynthesis; L-tryptophan from chorismate: step 1/5. With respect to regulation, feedback inhibited by tryptophan. Its function is as follows. Part of a heterotetrameric complex that catalyzes the two-step biosynthesis of anthranilate, an intermediate in the biosynthesis of L-tryptophan. In the first step, the glutamine-binding beta subunit (TrpG) of anthranilate synthase (AS) provides the glutamine amidotransferase activity which generates ammonia as a substrate that, along with chorismate, is used in the second step, catalyzed by the large alpha subunit of AS (TrpE) to produce anthranilate. In the absence of TrpG, TrpE can synthesize anthranilate directly from chorismate and high concentrations of ammonia. The chain is Anthranilate synthase component 1 (trpE) from Methanothermobacter thermautotrophicus (strain ATCC 29096 / DSM 1053 / JCM 10044 / NBRC 100330 / Delta H) (Methanobacterium thermoautotrophicum).